A 3550-amino-acid chain; its full sequence is Zinc finger homeobox protein 4 (3550 aa).

Position 1 is an N-acetylmethionine (Met-1). Disordered stretches follow at residues 1-54 (METC…LKTD), 426-479 (HLSS…AYSN), and 521-614 (TSSS…IECP). A compositionally biased stretch (polar residues) spans 9-20 (ISRQENGQSTSK). Composition is skewed to basic and acidic residues over residues 39 to 54 (EPDR…LKTD) and 433 to 451 (KMSE…KEST). Acidic residues predominate over residues 467-479 (EPGDEDEEDAYSN). Composition is skewed to polar residues over residues 542 to 553 (GRSNGNVTNSYS) and 566 to 576 (RDGTTAAPSET). C2H2-type zinc fingers lie at residues 611-634 (IECP…TMMH), 642-665 (LKCP…KEKH), and 697-721 (FRCE…SDKH). The disordered stretch occupies residues 739-763 (HSAPTPNTSLSGCGTPSPSKPKQKP). Residues 742–752 (PTPNTSLSGCG) are compositionally biased toward polar residues. C2H2-type zinc fingers lie at residues 765–787 (RRCE…MTSE), 915–939 (YQCK…TDKH), 971–993 (LKCN…TTNH), and 1019–1043 (YYCA…SVKH). Residues 1100–1142 (KAASEEPSEDAGDPLKPPTVAEDDEKEAHKRDNSEGKISTKDP) are disordered. The segment covering 1125-1142 (KEAHKRDNSEGKISTKDP) has biased composition (basic and acidic residues). A Glycyl lysine isopeptide (Lys-Gly) (interchain with G-Cter in SUMO2) cross-link involves residue Lys-1165. C2H2-type zinc fingers lie at residues 1188-1211 (YQYP…LSQH) and 1217-1240 (ICCP…THLH). The tract at residues 1271 to 1339 (APEKSEQDPP…EWNKTSSKDV (69 aa)) is disordered. A compositionally biased stretch (basic and acidic residues) spans 1297–1326 (VDDKSMSGLEDSKVGVEIKNEEQKPAKEPV). A Glycyl lysine isopeptide (Lys-Gly) (interchain with G-Cter in SUMO2) cross-link involves residue Lys-1315. 2 C2H2-type zinc fingers span residues 1368–1390 (YRCN…SQYH) and 1396–1419 (TMCT…EAGH). Residues 1467–1492 (EGKASPVESDGSSIPDDLGLEPKRTL) are disordered. Residues 1512-1538 (YKCTVCKESFTQKNILLVHYNSVSHLH) form a C2H2-type 12 zinc finger. A Glycyl lysine isopeptide (Lys-Gly) (interchain with G-Cter in SUMO2) cross-link involves residue Lys-1562. A C2H2-type 13 zinc finger spans residues 1564 to 1588 (YKCSTCSVAYSQSSTLEIHMRSVLH). The segment at 1779–1873 (PQLQPQNQQP…CIPPPRIASG (95 aa)) is disordered. Over residues 1792–1808 (QQQQPQQQPSKLLKQEQ) the composition is skewed to low complexity. Residue Lys-1805 forms a Glycyl lysine isopeptide (Lys-Gly) (interchain with G-Cter in SUMO2) linkage. The segment covering 1823-1860 (PSYKEAEEVTEKQEKPKQEFINDTEGLKDSKDIKKQKS) has biased composition (basic and acidic residues). The C2H2-type 14 zinc finger occupies 1916–1939 (LECGICGKLFSNVLILKSHQEHVH). The disordered stretch occupies residues 1984–2006 (KIPNTVSAPLQAPPPTPPSAPQQ). Pro residues predominate over residues 1994 to 2003 (QAPPPTPPSA). 2 consecutive DNA-binding regions (homeobox) follow at residues 2069-2128 (FKRP…RQRN) and 2166-2225 (KRSS…RKSY). A C2H2-type 15; degenerate zinc finger spans residues 2252-2276 (YQCKKCNVVFPRIFDLITHQKKQCY). Residues 2318–2331 (TLVASSGSGTSTPL) show a composition bias toward polar residues. The tract at residues 2318 to 2412 (TLVASSGSGT…SQTPIPSSPL (95 aa)) is disordered. Residues 2337–2355 (PEPEKNSPKTEYPGEKTKQ) show a composition bias toward basic and acidic residues. Residues 2356-2376 (SDPSLPQGTKSAPSSVLTSSE) are compositionally biased toward polar residues. The span at 2383–2392 (PQPPTQPPKQ) shows a compositional bias: pro residues. Residues 2401–2412 (SASQTPIPSSPL) show a composition bias toward polar residues. Residues 2430–2452 (YPCDQCTLAFPTLELWKEHQHMH) form a C2H2-type 16 zinc finger. Over residues 2490 to 2508 (GSSLTQMPPQTSTAHTTAP) the composition is skewed to polar residues. The disordered stretch occupies residues 2490 to 2545 (GSSLTQMPPQTSTAHTTAPASVAASLKRKLEDKEDNNCSEKEGGNSGEDQHRDKRL). Residues 2517–2541 (RKLEDKEDNNCSEKEGGNSGEDQHR) show a composition bias toward basic and acidic residues. The segment at residues 2542-2601 (DKRLRTTITPEQLEILYEKYLLDSNPTRKMLDHIAREVGLKKRVVQVWFQNTRARERKGQ) is a DNA-binding region (homeobox 3). The segment at 2612-2635 (KRCPFCRALFKAKSALESHIRSRH) adopts a C2H2-type 17 zinc-finger fold. The residue at position 2645 (Ser-2645) is a Phosphoserine. Disordered regions lie at residues 2746 to 2791 (AISD…ATTP) and 2810 to 2866 (HFND…PGHK). Positions 2781–2791 (LDSLQKPATTP) are enriched in polar residues. Positions 2811 to 2820 (FNDKDGDHDQ) are enriched in basic and acidic residues. Over residues 2843–2855 (PSSPNPFGSSNPF) the composition is skewed to low complexity. A DNA-binding region (homeobox 4) is located at residues 2865–2924 (HKRFRTQMSNLQLKVLKACFSDYRTPTMQECEMLGNEIGLPKRVVQVWFQNARAKERKFK). The C2H2-type 18 zinc finger occupies 2943-2967 (PECTLCGVKYSARLSIRDHIFSKQH). Disordered stretches follow at residues 3051–3156 (PSSL…EEKI) and 3261–3318 (QDSL…VQLD). Polar residues predominate over residues 3058–3068 (PQNSNTLTSPG). Residues 3075 to 3088 (PSSATSSPALSLSS) show a composition bias toward low complexity. The segment covering 3097-3109 (TPPPPPPPPPPPS) has biased composition (pro residues). Residues 3136 to 3156 (IKEEESEAIKPEKHPKKEEKI) show a composition bias toward basic and acidic residues. Lys-3137 is covalently cross-linked (Glycyl lysine isopeptide (Lys-Gly) (interchain with G-Cter in SUMO2)). Residues 3248–3277 (ALLQQYQQYQQSLQDSLQKQQKQQQEQQQK) adopt a coiled-coil conformation. Residues 3261–3276 (QDSLQKQQKQQQEQQQ) are compositionally biased toward low complexity. Over residues 3298–3318 (SETKEEKSTAPESTKEEVQLD) the composition is skewed to basic and acidic residues. The C2H2-type 19; degenerate zinc finger occupies 3337–3361 (FVCRKCQMMFTDEDATVNHQKSFCY). The segment at 3381–3405 (YQCLACDLALSGNEALSQHLQSSLH) adopts a C2H2-type 20 zinc-finger fold. Residues 3424-3445 (LPHSVCSPPPNTSSTSPSAASS) form a disordered region. A compositionally biased stretch (low complexity) spans 3435–3445 (TSSTSPSAASS).

This sequence belongs to the krueppel C2H2-type zinc-finger protein family. In terms of tissue distribution, expressed in brain, heart, lung, muscle and small intestine. No expression detected in undifferentiated P19 cells, however, expression was seen following retinoic acid treatment to induce neuronal differentiation. Expressed in undifferentiated C2C12 cells, following induction of muscle differentiation in a low-serum medium, expression levels were decreased.

The protein resides in the nucleus. May play a role in neural and muscle differentiation. May be involved in transcriptional regulation. The sequence is that of Zinc finger homeobox protein 4 (Zfhx4) from Mus musculus (Mouse).